The primary structure comprises 300 residues: GTPase Era (300 aa).

One can recognise an Era-type G domain in the interval Lys-4–Glu-172. The G1 stretch occupies residues Gly-12 to Ser-19. Gly-12 to Ser-19 provides a ligand contact to GTP. The tract at residues Gln-38–Asn-42 is G2. Residues Asp-59 to Gly-62 are G3. GTP contacts are provided by residues Asp-59 to Ile-63 and Asn-121 to Asp-124. The G4 stretch occupies residues Asn-121–Asp-124. Positions Ile-151–Ala-153 are G5. Positions Ile-195–Glu-280 constitute a KH type-2 domain.

It belongs to the TRAFAC class TrmE-Era-EngA-EngB-Septin-like GTPase superfamily. Era GTPase family. Monomer.

Its subcellular location is the cytoplasm. The protein localises to the cell inner membrane. Its function is as follows. An essential GTPase that binds both GDP and GTP, with rapid nucleotide exchange. Plays a role in 16S rRNA processing and 30S ribosomal subunit biogenesis and possibly also in cell cycle regulation and energy metabolism. The protein is GTPase Era of Thermotoga maritima (strain ATCC 43589 / DSM 3109 / JCM 10099 / NBRC 100826 / MSB8).